A 933-amino-acid chain; its full sequence is Myocardin (933 aa).

Residues 12–27 (IRSKFRSVLQLRLQQR) carry the MEF2C-binding motif. 3 RPEL repeats span residues 18–43 (SVLQ…PPLR), 62–87 (DTLK…QASS), and 106–131 (DDLN…PVDC). Positions 153 to 205 (FEEDSSSDGLSPDQTRSEDLPGSAGSPLDTKAAETPLAGPRGTVQDLTLGSEN) are HDAC5-binding. Disordered stretches follow at residues 154–282 (EEDS…PPPM) and 324–365 (NEQM…GPLP). The span at 210 to 220 (SAPQSGNQSDL) shows a compositional bias: polar residues. The span at 248 to 265 (NRHKKPKDPKPKVKKLKY) shows a compositional bias: basic residues. Residues 330 to 346 (NPNSSSAPLSSTPLSPA) show a composition bias toward low complexity. Over residues 347–357 (KNSFSGQTGVS) the composition is skewed to polar residues. Residues 368 to 402 (LDDLKVSELRQQLRIRGLPVSGTKTALMDRLRPFQ) enclose the SAP domain. Phosphoserine; by GSK3-beta occurs at positions 445, 449, 453, and 457. Positions 515–550 (LVEKQKVINELTWKLQQEQRQVEELRMQLQKQKRGT) form a coiled coil. The interval 568-613 (DAGSSCPFAPLPRAVKRQSNSSEEQPAAGDAARLRPLGNTHCAESS) is disordered. Phosphoserine; by GSK3-beta is present on residues Ser-621, Ser-625, Ser-629, and Ser-633. 2 disordered regions span residues 630–672 (PQHS…VSSP) and 760–794 (PKIP…FDHY). Residues 712-933 (ITQPPSYEDA…SPMDLHLQQW (222 aa)) form a required for interaction with and ubiquitination by STUB1 region. A phosphoserine; by MAPK1 and MAPK3 mark is found at Ser-810, Ser-857, and Ser-864. At Thr-891 the chain carries Phosphothreonine; by MAPK1 and MAPK3.

In terms of assembly, homodimer. Interacts with MLLT7/FOXO4. Interacts with SRF, its association does not depend on specific DNA sequences for ternary complex formation. Interacts (via C-terminal) with EP300 (via the CREB-binding domain). Interacts with HDAC4 and HDAC5. Interacts with MEF2C. Interacts (via C-terminus) with STUB1/CHIP. Interacts with PURB. In terms of processing, ubiquitinated; by STUB1/CHIP at the C-terminus, leading to its degradation by the proteasome. Phosphorylation by GSK3B is required for STUB1/CHIP-mediated ubiquitination. Post-translationally, phosphorylation negatively regulates the intrinsic myocardin transcriptional activity. Phosphorylated; by GSK3B. In terms of tissue distribution, expressed in the heart and in smooth muscle cells-containing tissues (aorta, pulmonary vein, lung), but is not detectable in skeletal muscle, liver, kidney and spleen.

It is found in the nucleus. In terms of biological role, smooth muscle cells (SM) and cardiac muscle cells-specific transcriptional factor which uses the canonical single or multiple CArG boxes DNA sequence. Acts as a cofactor of serum response factor (SRF) with the potential to modulate SRF-target genes. Plays a crucial role in cardiogenesis, urinary bladder development, and differentiation of the smooth muscle cell lineage (myogenesis). Positively regulates the transcription of genes involved in vascular smooth muscle contraction. This Sus scrofa (Pig) protein is Myocardin (MYOCD).